Here is a 276-residue protein sequence, read N- to C-terminus: Ribosomal RNA small subunit methyltransferase A (276 aa).

Residues Asn24, Leu26, Gly51, Glu72, Asp97, and Asn118 each contribute to the S-adenosyl-L-methionine site.

It belongs to the class I-like SAM-binding methyltransferase superfamily. rRNA adenine N(6)-methyltransferase family. RsmA subfamily.

The protein resides in the cytoplasm. The enzyme catalyses adenosine(1518)/adenosine(1519) in 16S rRNA + 4 S-adenosyl-L-methionine = N(6)-dimethyladenosine(1518)/N(6)-dimethyladenosine(1519) in 16S rRNA + 4 S-adenosyl-L-homocysteine + 4 H(+). In terms of biological role, specifically dimethylates two adjacent adenosines (A1518 and A1519) in the loop of a conserved hairpin near the 3'-end of 16S rRNA in the 30S particle. May play a critical role in biogenesis of 30S subunits. This Clostridium acetobutylicum (strain ATCC 824 / DSM 792 / JCM 1419 / IAM 19013 / LMG 5710 / NBRC 13948 / NRRL B-527 / VKM B-1787 / 2291 / W) protein is Ribosomal RNA small subunit methyltransferase A.